Reading from the N-terminus, the 373-residue chain is tRNA-specific 2-thiouridylase MnmA (373 aa).

Residues 12-19 and methionine 38 each bind ATP; that span reads GMSGGVDS. Residues 98-100 form an interaction with target base in tRNA region; sequence NPD. The active-site Nucleophile is the cysteine 103. A disulfide bridge connects residues cysteine 103 and cysteine 200. Position 127 (glycine 127) interacts with ATP. Residues 150-152 are interaction with tRNA; the sequence is KDQ. Residue cysteine 200 is the Cysteine persulfide intermediate of the active site. The segment at 312–313 is interaction with tRNA; sequence RY.

It belongs to the MnmA/TRMU family.

It localises to the cytoplasm. The catalysed reaction is S-sulfanyl-L-cysteinyl-[protein] + uridine(34) in tRNA + AH2 + ATP = 2-thiouridine(34) in tRNA + L-cysteinyl-[protein] + A + AMP + diphosphate + H(+). In terms of biological role, catalyzes the 2-thiolation of uridine at the wobble position (U34) of tRNA, leading to the formation of s(2)U34. This is tRNA-specific 2-thiouridylase MnmA from Streptococcus pneumoniae (strain P1031).